Reading from the N-terminus, the 469-residue chain is UDP-N-acetylmuramate--L-alanine ligase (469 aa).

119–125 (GTHGKTT) is an ATP binding site.

It belongs to the MurCDEF family.

It localises to the cytoplasm. The enzyme catalyses UDP-N-acetyl-alpha-D-muramate + L-alanine + ATP = UDP-N-acetyl-alpha-D-muramoyl-L-alanine + ADP + phosphate + H(+). The protein operates within cell wall biogenesis; peptidoglycan biosynthesis. In terms of biological role, cell wall formation. This Vesicomyosocius okutanii subsp. Calyptogena okutanii (strain HA) protein is UDP-N-acetylmuramate--L-alanine ligase.